Consider the following 221-residue polypeptide: 7-cyano-7-deazaguanine synthase (221 aa).

10-20 (LSGGLDSTTCM) provides a ligand contact to ATP. Zn(2+) contacts are provided by Cys188, Cys196, Cys199, and Cys202.

It belongs to the QueC family. Homodimer. The cofactor is Zn(2+).

The catalysed reaction is 7-carboxy-7-deazaguanine + NH4(+) + ATP = 7-cyano-7-deazaguanine + ADP + phosphate + H2O + H(+). It participates in purine metabolism; 7-cyano-7-deazaguanine biosynthesis. Catalyzes the ATP-dependent conversion of 7-carboxy-7-deazaguanine (CDG) to 7-cyano-7-deazaguanine (preQ(0)). In Oceanobacillus iheyensis (strain DSM 14371 / CIP 107618 / JCM 11309 / KCTC 3954 / HTE831), this protein is 7-cyano-7-deazaguanine synthase.